A 447-amino-acid chain; its full sequence is MANSITADEIREQFSQAMSAMYQQEVPQYGTLLELVADVNLAVLENNPQLHEKMVNADELARLNVERHGAIRVGTAQELATLRRMFAIMGMYPVSYYDLSQAGVPVHSTAFRPIDDASLARNPFRVFTSLLRLELIENEILRQKAAEILRQRDIFTPRCRQLLEEYEQQGGFNETQAQEFVQEALETFRWHQSATVDEETYRALHNEHRLIADVVCFPGCHINHLTPRTLDIDRVQSMMPECGIEPKILIEGPPRREVPILLRQTSFKALEETVLFAGQKQGTHTARFGEIEQRGVALTPKGRQLYDDLLRNAGTGQDNLTHQMHLQETFRTFPDSEFLMRQQGLAWFRYRLTPSGEAHRQAIHPGDDPQPLIERGWVVAQPITYEDFLPVSAAGIFQSNLGNETQTRSHGNASREAFEQALGCPVLDEFQLYQEAEERSKRRCGLL.

3 residues coordinate 2-oxoadipate: histidine 68, arginine 72, and histidine 224. Histidine 68 is a binding site for Fe(2+). 2 residues coordinate Fe(2+): histidine 224 and glutamate 290. Residue valine 391 coordinates 2-oxoadipate.

It belongs to the 2-oxoadipate dioxygenase/decarboxylase family. Requires Fe(2+) as cofactor.

The enzyme catalyses 2-oxoadipate + O2 = (R)-2-hydroxyglutarate + CO2. Its function is as follows. Catalyzes the decarboxylation and hydroxylation of 2-oxoadipate (2OA) to form D-2-hydroxyglutarate (D-2-HGA). This Escherichia coli (strain K12) protein is 2-oxoadipate dioxygenase/decarboxylase (ydcJ).